A 330-amino-acid chain; its full sequence is Ketol-acid reductoisomerase (NADP(+)) (330 aa).

Positions 1-181 constitute a KARI N-terminal Rossmann domain; that stretch reads MKVFYDSDFK…GLSRAGVIQT (181 aa). NADP(+) is bound by residues 24–27, R47, S52, and 82–85; these read YGSQ and DELQ. Residue H107 is part of the active site. Position 133 (G133) interacts with NADP(+). Residues 182-327 form the KARI C-terminal knotted domain; it reads TFKEETETDL…AKLRKMCGLE (146 aa). Positions 190, 194, 226, and 230 each coordinate Mg(2+). S251 contributes to the substrate binding site.

It belongs to the ketol-acid reductoisomerase family. Mg(2+) is required as a cofactor.

It catalyses the reaction (2R)-2,3-dihydroxy-3-methylbutanoate + NADP(+) = (2S)-2-acetolactate + NADPH + H(+). The catalysed reaction is (2R,3R)-2,3-dihydroxy-3-methylpentanoate + NADP(+) = (S)-2-ethyl-2-hydroxy-3-oxobutanoate + NADPH + H(+). It functions in the pathway amino-acid biosynthesis; L-isoleucine biosynthesis; L-isoleucine from 2-oxobutanoate: step 2/4. The protein operates within amino-acid biosynthesis; L-valine biosynthesis; L-valine from pyruvate: step 2/4. Functionally, involved in the biosynthesis of branched-chain amino acids (BCAA). Catalyzes an alkyl-migration followed by a ketol-acid reduction of (S)-2-acetolactate (S2AL) to yield (R)-2,3-dihydroxy-isovalerate. In the isomerase reaction, S2AL is rearranged via a Mg-dependent methyl migration to produce 3-hydroxy-3-methyl-2-ketobutyrate (HMKB). In the reductase reaction, this 2-ketoacid undergoes a metal-dependent reduction by NADPH to yield (R)-2,3-dihydroxy-isovalerate. The chain is Ketol-acid reductoisomerase (NADP(+)) from Methanococcus maripaludis (strain C6 / ATCC BAA-1332).